Consider the following 106-residue polypeptide: Defensin-like protein 1 (106 aa).

The signal sequence occupies residues 1–25; the sequence is MARSLCFMAFAVLAMMLFVAYEVQA. Cystine bridges form between C29–C73, C40–C60, C46–C67, and C50–C69.

The protein belongs to the DEFL family.

Its subcellular location is the secreted. The protein resides in the vacuole. This Nicotiana paniculata protein is Defensin-like protein 1 (THIO1).